The primary structure comprises 310 residues: Putative HTH-type transcriptional regulatory protein YN1551_1579 (310 aa).

Residues 125 to 180 (LKHKREEMGYSIGDVAKFLGVSRKAIYDYEKGDSDVSLEVAEKLIDLFGDDIIGDV) form the HTH cro/C1-type domain. Positions 136–155 (IGDVAKFLGVSRKAIYDYEK) form a DNA-binding region, H-T-H motif.

This is Putative HTH-type transcriptional regulatory protein YN1551_1579 from Saccharolobus islandicus (strain Y.N.15.51 / Yellowstone #2) (Sulfolobus islandicus).